A 346-amino-acid chain; its full sequence is Putative [LysW]-L-2-aminoadipate/[LysW]-L-glutamate phosphate reductase (346 aa).

Residue 12 to 15 coordinates NADP(+); it reads SGFT. Cys-147 is an active-site residue. Asn-310 is an NADP(+) binding site.

Belongs to the NAGSA dehydrogenase family. Type 1 subfamily. LysY sub-subfamily.

Its subcellular location is the cytoplasm. It carries out the reaction [amino-group carrier protein]-C-terminal-N-(1-carboxy-5-oxopentan-1-yl)-L-glutamine + phosphate + NADP(+) = [amino-group carrier protein]-C-terminal-N-(1-carboxy-5-phosphooxy-5-oxopentan-1-yl)-L-glutamine + NADPH + H(+). The enzyme catalyses [amino-group carrier protein]-C-terminal-gamma-(L-glutamyl-5-semialdehyde)-L-glutamate + phosphate + NADP(+) = [amino-group carrier protein]-C-terminal-gamma-(5-phospho-L-glutamyl)-L-glutamate + NADPH + H(+). It participates in amino-acid biosynthesis; L-lysine biosynthesis via AAA pathway; L-lysine from L-alpha-aminoadipate (Thermus route): step 3/5. It functions in the pathway amino-acid biosynthesis; L-arginine biosynthesis. Functionally, involved in both the arginine and lysine biosynthetic pathways. The sequence is that of Putative [LysW]-L-2-aminoadipate/[LysW]-L-glutamate phosphate reductase from Natronomonas pharaonis (strain ATCC 35678 / DSM 2160 / CIP 103997 / JCM 8858 / NBRC 14720 / NCIMB 2260 / Gabara) (Halobacterium pharaonis).